The sequence spans 354 residues: Acyl-CoA-binding domain-containing protein 2 (354 aa).

Residues 11–31 (VILGLIFSYLLAKLISIVVTF) traverse the membrane as a helical; Signal-anchor segment. A disordered region spans residues 75-96 (AEQGSSRSDSVAGDDSEEDDDW). The span at 86-96 (AGDDSEEDDDW) shows a compositional bias: acidic residues. The ACB domain occupies 104 to 194 (LDEAFSAATL…VTQLYPTWLD (91 aa)). An acyl-CoA contacts are provided by residues 136 to 140 (YGLYK), K162, and Y181. ANK repeat units lie at residues 265-294 (EGRT…DVNA) and 298-327 (EGQT…NTAA).

The protein belongs to the ACBP family. As to quaternary structure, interacts (via ankyrin repeats) with HIPP26 and the ethylene-responsive element-binding proteins RAP2-3/EBP and RAP2-12. Interacts with CSE. As to expression, mostly expressed in roots and flowers, and, to a lower extent, in stems, pods and leaves (at protein level).

It is found in the cell membrane. It localises to the endoplasmic reticulum membrane. The protein localises to the peroxisome membrane. Its function is as follows. Binds medium- and long-chain acyl-CoA esters with very high affinity. Can interact in vitro with palmitoyl-CoA, but not with oleoyl-CoA. Binds to lead ions (Pb). May function as an intracellular carrier of acyl-CoA esters. Required for proper phospholipid and, to a lower extent, galactolipid composition. The sequence is that of Acyl-CoA-binding domain-containing protein 2 (ACBP2) from Arabidopsis thaliana (Mouse-ear cress).